The primary structure comprises 256 residues: Triosephosphate isomerase (256 aa).

Residue 9 to 11 (NWK) participates in substrate binding. Catalysis depends on H97, which acts as the Electrophile. E169 (proton acceptor) is an active-site residue. Residues G175, S214, and 235 to 236 (GG) each bind substrate.

It belongs to the triosephosphate isomerase family. Homodimer.

Its subcellular location is the cytoplasm. The enzyme catalyses D-glyceraldehyde 3-phosphate = dihydroxyacetone phosphate. The protein operates within carbohydrate biosynthesis; gluconeogenesis. It participates in carbohydrate degradation; glycolysis; D-glyceraldehyde 3-phosphate from glycerone phosphate: step 1/1. Functionally, involved in the gluconeogenesis. Catalyzes stereospecifically the conversion of dihydroxyacetone phosphate (DHAP) to D-glyceraldehyde-3-phosphate (G3P). In Vibrio vulnificus (strain CMCP6), this protein is Triosephosphate isomerase.